Reading from the N-terminus, the 272-residue chain is ATP phosphoribosyltransferase regulatory subunit (272 aa).

The protein belongs to the class-II aminoacyl-tRNA synthetase family. HisZ subfamily. As to quaternary structure, heteromultimer composed of HisG and HisZ subunits.

It localises to the cytoplasm. It participates in amino-acid biosynthesis; L-histidine biosynthesis; L-histidine from 5-phospho-alpha-D-ribose 1-diphosphate: step 1/9. Functionally, required for the first step of histidine biosynthesis. May allow the feedback regulation of ATP phosphoribosyltransferase activity by histidine. In Staphylococcus aureus (strain bovine RF122 / ET3-1), this protein is ATP phosphoribosyltransferase regulatory subunit.